A 672-amino-acid polypeptide reads, in one-letter code: tRNA 5-methylaminomethyl-2-thiouridine biosynthesis bifunctional protein MnmC (672 aa).

The tRNA (mnm(5)s(2)U34)-methyltransferase stretch occupies residues 1–243; it reads MTSITHAELG…KREMIAGCME (243 aa). The interval 269–672 is FAD-dependent cmnm(5)s(2)U34 oxidoreductase; that stretch reads IGGGIASAAL…LRKGKAITEL (404 aa).

In the N-terminal section; belongs to the methyltransferase superfamily. tRNA (mnm(5)s(2)U34)-methyltransferase family. It in the C-terminal section; belongs to the DAO family. Requires FAD as cofactor.

It is found in the cytoplasm. The catalysed reaction is 5-aminomethyl-2-thiouridine(34) in tRNA + S-adenosyl-L-methionine = 5-methylaminomethyl-2-thiouridine(34) in tRNA + S-adenosyl-L-homocysteine + H(+). Catalyzes the last two steps in the biosynthesis of 5-methylaminomethyl-2-thiouridine (mnm(5)s(2)U) at the wobble position (U34) in tRNA. Catalyzes the FAD-dependent demodification of cmnm(5)s(2)U34 to nm(5)s(2)U34, followed by the transfer of a methyl group from S-adenosyl-L-methionine to nm(5)s(2)U34, to form mnm(5)s(2)U34. The chain is tRNA 5-methylaminomethyl-2-thiouridine biosynthesis bifunctional protein MnmC from Vibrio vulnificus (strain CMCP6).